A 186-amino-acid chain; its full sequence is uncharacterized protein (186 aa).

An N-terminal signal peptide occupies residues methionine 1–alanine 21.

This is an uncharacterized protein from Rickettsia conorii (strain ATCC VR-613 / Malish 7).